Reading from the N-terminus, the 364-residue chain is GTPase Obg (364 aa).

One can recognise an Obg domain in the interval 1 to 161 (MRFVDEVTIS…KYLRLELKIL (161 aa)). The region spanning 162–334 (ADAGIIGLPN…LVDAIWKLQS (173 aa)) is the OBG-type G domain. GTP-binding positions include 168 to 175 (GLPNAGKS), 193 to 197 (FTTLN), 217 to 220 (DIPG), 287 to 290 (NKID), and 315 to 317 (SAE). Ser175 and Thr195 together coordinate Mg(2+).

This sequence belongs to the TRAFAC class OBG-HflX-like GTPase superfamily. OBG GTPase family. In terms of assembly, monomer. It depends on Mg(2+) as a cofactor.

The protein localises to the cytoplasm. In terms of biological role, an essential GTPase which binds GTP, GDP and possibly (p)ppGpp with moderate affinity, with high nucleotide exchange rates and a fairly low GTP hydrolysis rate. Plays a role in control of the cell cycle, stress response, ribosome biogenesis and in those bacteria that undergo differentiation, in morphogenesis control. This Lawsonia intracellularis (strain PHE/MN1-00) protein is GTPase Obg.